A 304-amino-acid polypeptide reads, in one-letter code: Ribonuclease HII (304 aa).

Residues 1-53 form a disordered region; sequence MIRDTKQPIKVPAKPASRSGGKAKTVKPKTVKPKAVKAADGKAASAKASTSKA. Residues 24–35 show a composition bias toward basic residues; it reads KTVKPKTVKPKA. The segment covering 36–53 has biased composition (low complexity); that stretch reads VKAADGKAASAKASTSKA. The RNase H type-2 domain occupies 96–284; the sequence is WPIAGCDEAG…VAAAWQKIEG (189 aa). Residues Asp-102, Glu-103, and Asp-193 each contribute to the a divalent metal cation site.

It belongs to the RNase HII family. It depends on Mn(2+) as a cofactor. Mg(2+) is required as a cofactor.

The protein resides in the cytoplasm. The enzyme catalyses Endonucleolytic cleavage to 5'-phosphomonoester.. Functionally, endonuclease that specifically degrades the RNA of RNA-DNA hybrids. This chain is Ribonuclease HII, found in Rhodopseudomonas palustris (strain ATCC BAA-98 / CGA009).